The chain runs to 130 residues: Small ribosomal subunit protein uS11 (130 aa).

This sequence belongs to the universal ribosomal protein uS11 family. As to quaternary structure, part of the 30S ribosomal subunit. Interacts with proteins S7 and S18. Binds to IF-3.

Located on the platform of the 30S subunit, it bridges several disparate RNA helices of the 16S rRNA. Forms part of the Shine-Dalgarno cleft in the 70S ribosome. The polypeptide is Small ribosomal subunit protein uS11 (Kosmotoga olearia (strain ATCC BAA-1733 / DSM 21960 / TBF 19.5.1)).